The chain runs to 328 residues: Nuclear transcription factor Y subunit A-8 (328 aa).

The segment at 54–86 (KNISFQDQDSSSTLSSAQSSNDVTSSGDDNPSR) is disordered. The span at 57 to 75 (SFQDQDSSSTLSSAQSSND) shows a compositional bias: low complexity. The segment covering 76-86 (VTSSGDDNPSR) has biased composition (polar residues). Positions 175–198 (FVNAKQFHAIMRRRQQRAKLEAQN) match the Subunit association domain (SAD) motif. The segment at residues 205–230 (KPYLHESRHVHALKRPRGSGGRFLNT) is a DNA-binding region (NFYA/HAP2-type).

Belongs to the NFYA/HAP2 subunit family. In terms of assembly, heterotrimeric transcription factor composed of three components, NF-YA, NF-YB and NF-YC. NF-YB and NF-YC must interact and dimerize for NF-YA association and DNA binding. As to expression, expressed in the whole plant, except roots.

It localises to the nucleus. Its function is as follows. Stimulates the transcription of various genes by recognizing and binding to a CCAAT motif in promoters. The polypeptide is Nuclear transcription factor Y subunit A-8 (NFYA8) (Arabidopsis thaliana (Mouse-ear cress)).